The primary structure comprises 229 residues: Sec-independent protein translocase protein TatB (229 aa).

The helical transmembrane segment at M1 to G21 threads the bilayer. The segment at E90–Y131 is disordered. The span at P108–Y131 shows a compositional bias: polar residues.

Belongs to the TatB family. As to quaternary structure, the Tat system comprises two distinct complexes: a TatABC complex, containing multiple copies of TatA, TatB and TatC subunits, and a separate TatA complex, containing only TatA subunits. Substrates initially bind to the TatABC complex, which probably triggers association of the separate TatA complex to form the active translocon.

It is found in the cell inner membrane. Part of the twin-arginine translocation (Tat) system that transports large folded proteins containing a characteristic twin-arginine motif in their signal peptide across membranes. Together with TatC, TatB is part of a receptor directly interacting with Tat signal peptides. TatB may form an oligomeric binding site that transiently accommodates folded Tat precursor proteins before their translocation. The sequence is that of Sec-independent protein translocase protein TatB from Psychrobacter arcticus (strain DSM 17307 / VKM B-2377 / 273-4).